Consider the following 219-residue polypeptide: Small ribosomal subunit protein uS3 (219 aa).

In terms of domain architecture, KH type-2 spans 38–107; the sequence is IREYIENKMK…RVHINVVEVK (70 aa).

The protein belongs to the universal ribosomal protein uS3 family. Part of the 30S ribosomal subunit. Forms a tight complex with proteins S10 and S14.

Functionally, binds the lower part of the 30S subunit head. Binds mRNA in the 70S ribosome, positioning it for translation. The sequence is that of Small ribosomal subunit protein uS3 from Exiguobacterium sp. (strain ATCC BAA-1283 / AT1b).